The primary structure comprises 223 residues: 7-cyano-7-deazaguanine synthase (223 aa).

10 to 20 provides a ligand contact to ATP; the sequence is FSGGQDSTTCL. Positions 188, 197, 200, and 203 each coordinate Zn(2+).

It belongs to the QueC family. It depends on Zn(2+) as a cofactor.

The catalysed reaction is 7-carboxy-7-deazaguanine + NH4(+) + ATP = 7-cyano-7-deazaguanine + ADP + phosphate + H2O + H(+). The protein operates within purine metabolism; 7-cyano-7-deazaguanine biosynthesis. Functionally, catalyzes the ATP-dependent conversion of 7-carboxy-7-deazaguanine (CDG) to 7-cyano-7-deazaguanine (preQ(0)). The polypeptide is 7-cyano-7-deazaguanine synthase (Phocaeicola vulgatus (strain ATCC 8482 / DSM 1447 / JCM 5826 / CCUG 4940 / NBRC 14291 / NCTC 11154) (Bacteroides vulgatus)).